A 2572-amino-acid polypeptide reads, in one-letter code: Highly reducing polyketide synthase phiA (2572 aa).

Residues 11-438 (IMPIAVVGMS…GANAHVIIES (428 aa)) form the Ketosynthase family 3 (KS3) domain. Catalysis depends on for beta-ketoacyl synthase activity residues Cys186, His321, and His361. The 327-residue stretch at 591 to 917 (FVFTGQGAQW…HTALARKKDA (327 aa)) folds into the Malonyl-CoA:ACP transacylase (MAT) domain. Residues 983–1120 (VDLLGVLERN…GLISVQTPQK (138 aa)) are N-terminal hotdog fold. Residues 983 to 1307 (VDLLGVLERN…CATLERDGGG (325 aa)) enclose the PKS/mFAS DH domain. The active-site Proton acceptor; for dehydratase activity is the His1015. The C-terminal hotdog fold stretch occupies residues 1150 to 1307 (RKEIDVSQFY…CATLERDGGG (158 aa)). Catalysis depends on Asp1215, which acts as the Proton donor; for dehydratase activity. A methyltransferase (CMeT) domain region spans residues 1353–1654 (LERAAFYYLH…LSSSTNKTNY (302 aa)). The region spanning 1870–2182 (GLLDTLHFTE…TGGHMGKLVA (313 aa)) is the Enoyl reductase (ER) domain. Positions 2206-2383 (ASYLLVGGLG…ATTLDLGAIS (178 aa)) constitute a Ketoreductase (KR) domain. A Carrier domain is found at 2484–2561 (AASEAICDAL…GLAAKIAKRS (78 aa)). The residue at position 2521 (Ser2521) is an O-(pantetheine 4'-phosphoryl)serine.

The cofactor is pantetheine 4'-phosphate.

It functions in the pathway secondary metabolite biosynthesis. Its function is as follows. Highly reducing polyketide synthase; part of the gene cluster that mediates the biosynthesis of the antihypercholesterolemic agents phomoidrides which are dimeric anhydrides. The pathway begins with the highly reducing polyketide synthase phiA that catalyzes the formation of a C12-fatty acyl-ACP, starting from one acetate and 5 malonate units. The hydrolase phiM is involved in the release of the C12-fatty acyl chain from phiA. The alkylcitrate synthase (ACS) phiJ and the alkylcitrate dehydratase (ACDH) phiI then give rise to decarboxylated monomeric anhydrides by coupling the C12-fatty acyl chain with oxalacetic acid. The cyclase phiC is responsible for the dimerization of the monomeric anhydrides which leads to the production of prephomoidride that contains the characteristic bicyclo[4.3.1]deca-1,6-diene system of phomoidrides. Iterative oxidation catalyzed by the alpha-ketoglutarate-dependent dioxygenase phiK produced then phomoidride A. Finally, the methyltransferase phiE converts phomoidride A to phomoidride B via an acetalization reaction. The phosphatidylethanolamine-binding protein phiB and phiN are not essential for dimerization and their functions have still to be determined. This chain is Highly reducing polyketide synthase phiA, found in Fungal sp. (strain ATCC 74256).